Here is a 326-residue protein sequence, read N- to C-terminus: MTHSCRLSVAPMLDWTDRHCRYFHRLMTKETLLYTEMITTGAIIHGKGDFLAYNQEEHPVALQLGGSNPQDLATCAKLAAERGYDEVNLNVGCPSDRVQNGRFGACLMAEPQLVADCVAAMKEVVDIPVTVKTRIGIDDQDSYEFLTDFVSIVSEKGGCEQFTIHARKAWLSGLSPKENREIPPLDYPRAYQLKKDFSHLTIAINGGVKSLEEAKEHLQHLDGVMIGREAYQSPYLLASVDQELFGSQSPIKKRRQIVEEMYPYIEQQLANGAYLGHMTRHMLGLFQNMPGARQWRRHISENAHKPGSGIEVLQQALAKIPQELDV.

Residues 11-13 and glutamine 63 each bind FMN; that span reads PML. Cysteine 93 (proton donor) is an active-site residue. FMN-binding positions include lysine 132, histidine 165, 205–207, and 227–228; these read NGG and GR.

It belongs to the Dus family. DusA subfamily. FMN serves as cofactor.

The enzyme catalyses 5,6-dihydrouridine(20) in tRNA + NADP(+) = uridine(20) in tRNA + NADPH + H(+). It carries out the reaction 5,6-dihydrouridine(20) in tRNA + NAD(+) = uridine(20) in tRNA + NADH + H(+). The catalysed reaction is 5,6-dihydrouridine(20a) in tRNA + NADP(+) = uridine(20a) in tRNA + NADPH + H(+). It catalyses the reaction 5,6-dihydrouridine(20a) in tRNA + NAD(+) = uridine(20a) in tRNA + NADH + H(+). Its function is as follows. Catalyzes the synthesis of 5,6-dihydrouridine (D), a modified base found in the D-loop of most tRNAs, via the reduction of the C5-C6 double bond in target uridines. Specifically modifies U20 and U20a in tRNAs. The chain is tRNA-dihydrouridine(20/20a) synthase from Vibrio vulnificus (strain CMCP6).